The following is a 239-amino-acid chain: Adenylate dimethylallyltransferase (239 aa).

This sequence belongs to the isopentenyl transferase family.

The catalysed reaction is dimethylallyl diphosphate + AMP = N(6)-(dimethylallyl)adenosine 5'-phosphate + diphosphate. In terms of biological role, transfers dimethylallyl groups to AMP as part of the biosynthesis of cytokinin phytohormones. This chain is Adenylate dimethylallyltransferase (ipt), found in Rhizobium radiobacter (Agrobacterium tumefaciens).